The sequence spans 229 residues: PKHD-type hydroxylase Rpal_3968 (229 aa).

One can recognise a Fe2OG dioxygenase domain in the interval 78–180; the sequence is QIFPPLFNRY…RVASFFWLQS (103 aa). 3 residues coordinate Fe cation: H98, D100, and H161. R171 is a 2-oxoglutarate binding site.

Fe(2+) is required as a cofactor. The cofactor is L-ascorbate.

This chain is PKHD-type hydroxylase Rpal_3968, found in Rhodopseudomonas palustris (strain TIE-1).